The primary structure comprises 510 residues: Holliday junction branch migration ATPase PINA (510 aa).

In terms of assembly, homohexamer. Interacts with Holliday junction resolvase Hjc, interacts with helicase Hjm (Hel308).

The enzyme catalyses ATP + H2O = ADP + phosphate + H(+). Its function is as follows. Important for growth at low temperatures (less than 65 degrees Celsius in this organism). Promotes Holliday junction (HJ) branch migration and unwinds Y-shaped DNA (but not replication forks or dsDNA) in an ATP hydrolysis-dependent manner. Stimulates cleavage by HJ resolvase Hjc. Hjc, Hjm (Hel308) and PINA coordinate HJ migration and cleavage of replication forks in a coordinated way. Probably acts as an ATP-dependent pump that pulls DNA through the hexamer. The polypeptide is Holliday junction branch migration ATPase PINA (Sulfolobus acidocaldarius (strain ATCC 33909 / DSM 639 / JCM 8929 / NBRC 15157 / NCIMB 11770)).